A 499-amino-acid polypeptide reads, in one-letter code: MNDFSQPVIDSIHKPRDAANPRERYAAGVMKYREMGYWQPDYAPKDTDVIALFRITPQPGVDPEEAAAAVAGESSTATWTVVWTDRLTACDIYRAKAYRVDPVPASNAAEPQYFAYIAYELDLFEEGSVANLTASIIGNVFGFKPLKALRLEDMRIPVAYLKTFQGPPTGIVVERERLDKYGRPLLGATVKPKLGLSGKNYGRVVYEGLRGGLDFLKDDENINSQAFMHWRDRFLFAMEAVNRAQAETGEVKGHYLNVTAGTMEDMYERAEFAKELGSCIVMIDLVIGWTAIQSMARWARRNDMILHLHRAGHSTYTRQRNHGISFRVIAKWLRMAGVDHAHAGTAVGKLEGDPLSVQGYYNVCRESHNEVDLSRGIFFDQPWAGLRKVMPVASGGIHAGQMHQLLDLFGDDAILQFGGGTIGHPAGIQAGAVANRVALEAMVKARNEGRDIVHEGPDILEAAARWCTPLKQALDTWRDVTFNYASTDTPDFAATPTAA.

The substrate site is built by Asn139 and Thr189. The active-site Proton acceptor is Lys191. Lys193 contributes to the substrate binding site. The Mg(2+) site is built by Lys217, Asp219, and Glu220. At Lys217 the chain carries N6-carboxylysine. His309 (proton acceptor) is an active-site residue. Arg310, His342, and Ser394 together coordinate substrate.

Belongs to the RuBisCO large chain family. Type I subfamily. Heterohexadecamer of 8 large chains and 8 small chains. Requires Mg(2+) as cofactor.

It catalyses the reaction 2 (2R)-3-phosphoglycerate + 2 H(+) = D-ribulose 1,5-bisphosphate + CO2 + H2O. The catalysed reaction is D-ribulose 1,5-bisphosphate + O2 = 2-phosphoglycolate + (2R)-3-phosphoglycerate + 2 H(+). Its function is as follows. RuBisCO catalyzes two reactions: the carboxylation of D-ribulose 1,5-bisphosphate, the primary event in carbon dioxide fixation, as well as the oxidative fragmentation of the pentose substrate. Both reactions occur simultaneously and in competition at the same active site. This Paraburkholderia xenovorans (strain LB400) protein is Ribulose bisphosphate carboxylase large chain.